The following is a 243-amino-acid chain: Small ribosomal subunit protein uS3 (243 aa).

In terms of domain architecture, KH type-2 spans 39–110 (IRKFIHKKYG…QVRINVVEVE (72 aa)). Residues 217 to 243 (QQLPVGATPRRRAGRRPQQFEDRSNEG) are disordered. Residues 234-243 (QQFEDRSNEG) are compositionally biased toward basic and acidic residues.

It belongs to the universal ribosomal protein uS3 family. In terms of assembly, part of the 30S ribosomal subunit. Forms a tight complex with proteins S10 and S14.

Its function is as follows. Binds the lower part of the 30S subunit head. Binds mRNA in the 70S ribosome, positioning it for translation. This is Small ribosomal subunit protein uS3 from Synechococcus sp. (strain WH7803).